Consider the following 260-residue polypeptide: Vesicle-associated membrane protein 7B (260 aa).

The Cytoplasmic segment spans residues 1-189 (MPIIYSLVAR…KCAMWWKNVK (189 aa)). One can recognise a Longin domain in the interval 7–110 (LVARGSSVLA…GMNSDFSRTL (104 aa)). The region spanning 125 to 186 (TMSRTMAEID…KQLKCAMWWK (62 aa)) is the v-SNARE coiled-coil homology domain. A helical; Anchor for type IV membrane protein membrane pass occupies residues 190-210 (LMLVLGAIVLIIIFIIVMSYC). The Vesicular segment spans residues 211-260 (DGFRSGSKCRSSPSSNSTPTPTPTETPTPTPTPTSTPTPSQLLETLLNQF). The interval 215 to 250 (SGSKCRSSPSSNSTPTPTPTETPTPTPTPTSTPTPS) is disordered. Residues 230-246 (TPTPTETPTPTPTPTST) show a composition bias toward pro residues.

This sequence belongs to the synaptobrevin family.

It localises to the cytoplasmic vesicle. The protein resides in the secretory vesicle membrane. It is found in the golgi apparatus. Its subcellular location is the trans-Golgi network membrane. The protein localises to the late endosome membrane. It localises to the lysosome membrane. The protein resides in the endoplasmic reticulum membrane. It is found in the phagosome membrane. In terms of biological role, involved in the targeting and/or fusion of transport vesicles to their target membrane during transport of proteins from the early endosome to the lysosome. Required for heterotypic fusion of late endosomes with lysosomes and homotypic lysosomal fusion. The sequence is that of Vesicle-associated membrane protein 7B from Dictyostelium discoideum (Social amoeba).